The primary structure comprises 99 residues: Malonate decarboxylase acyl carrier protein (99 aa).

An O-(phosphoribosyl dephospho-coenzyme A)serine modification is found at serine 25.

Belongs to the MdcC family. Post-translationally, covalently binds the prosthetic group of malonate decarboxylase.

It localises to the cytoplasm. Subunit of malonate decarboxylase, it is an acyl carrier protein to which acetyl and malonyl thioester residues are bound via a 2'-(5''-phosphoribosyl)-3'-dephospho-CoA prosthetic group and turn over during the catalytic mechanism. The protein is Malonate decarboxylase acyl carrier protein of Pseudomonas putida (strain W619).